The sequence spans 346 residues: Phosphoribosylformylglycinamidine cyclo-ligase (346 aa).

The protein belongs to the AIR synthase family.

The protein localises to the cytoplasm. It carries out the reaction 2-formamido-N(1)-(5-O-phospho-beta-D-ribosyl)acetamidine + ATP = 5-amino-1-(5-phospho-beta-D-ribosyl)imidazole + ADP + phosphate + H(+). Its pathway is purine metabolism; IMP biosynthesis via de novo pathway; 5-amino-1-(5-phospho-D-ribosyl)imidazole from N(2)-formyl-N(1)-(5-phospho-D-ribosyl)glycinamide: step 2/2. The sequence is that of Phosphoribosylformylglycinamidine cyclo-ligase from Geobacillus thermodenitrificans (strain NG80-2).